A 119-amino-acid chain; its full sequence is Host cell factor C1 regulator 1 (119 aa).

Positions Met-1–Pro-34 are disordered. The interaction with HCFC1 stretch occupies residues Asp-57–Tyr-60. A Nuclear export signal motif is present at residues Ile-91–Leu-100.

Interacts with HCFC1.

The protein resides in the cytoplasm. The protein localises to the nucleus. Regulates HCFC1 activity by modulating its subcellular localization. Overexpression of HCFC1R1 leads to accumulation of HCFC1 in the cytoplasm. HCFC1R1-mediated export may provide the pool of cytoplasmic HCFC1 required for import of virion-derived VP16 into the nucleus. The protein is Host cell factor C1 regulator 1 (HCFC1R1) of Bos taurus (Bovine).